A 499-amino-acid polypeptide reads, in one-letter code: Maturase K (499 aa).

The protein belongs to the intron maturase 2 family. MatK subfamily.

The protein localises to the plastid. Its subcellular location is the chloroplast. Usually encoded in the trnK tRNA gene intron. Probably assists in splicing its own and other chloroplast group II introns. The protein is Maturase K of Batis maritima (Maritime saltwort).